The following is a 370-amino-acid chain: Cysteine synthase 1 (370 aa).

Residues 1 to 16 (MFRQSVRRFATAALRS) constitute a mitochondrion transit peptide. Residue lysine 73 is modified to N6-(pyridoxal phosphate)lysine. Pyridoxal 5'-phosphate-binding positions include asparagine 103, 209–213 (GTGGT), and serine 308.

It belongs to the cysteine synthase/cystathionine beta-synthase family. Pyridoxal 5'-phosphate serves as cofactor.

It is found in the mitochondrion. It catalyses the reaction O-succinyl-L-serine + hydrogen sulfide = L-cysteine + succinate. It carries out the reaction O-acetyl-L-serine + hydrogen sulfide = L-cysteine + acetate. It functions in the pathway amino-acid biosynthesis; L-cysteine biosynthesis; L-cysteine from L-serine: step 2/2. In terms of biological role, catalyzes the conversion of O-succinyl-L-serine into cysteine, the last step in the cysteine biosynthesis pathway. Can also use O-acetyl-L-serine. This is Cysteine synthase 1 from Emericella nidulans (strain FGSC A4 / ATCC 38163 / CBS 112.46 / NRRL 194 / M139) (Aspergillus nidulans).